A 736-amino-acid chain; its full sequence is Subtilisin-like protease SBT4.12 (736 aa).

The first 24 residues, 1 to 24 (MANLAASTCLYSWLLVLLLSSVSA), serve as a signal peptide directing secretion. Positions 25–110 (IIDEDTQVYI…VFPNKILQLH (86 aa)) are cleaved as a propeptide — activation peptide. Residues 32-110 (VYIVYMGSLS…VFPNKILQLH (79 aa)) enclose the Inhibitor I9 domain. Positions 114-580 (SWDFMGVKEG…AGHVDPMAAL (467 aa)) constitute a Peptidase S8 domain. Aspartate 142 functions as the Charge relay system in the catalytic mechanism. The N-linked (GlcNAc...) asparagine glycan is linked to asparagine 173. Histidine 197 (charge relay system) is an active-site residue. N-linked (GlcNAc...) asparagine glycosylation is found at asparagine 220, asparagine 381, and asparagine 459. A PA domain is found at 353 to 437 (KYPLVYGKSA…GLKAKDFKSL (85 aa)). The active-site Charge relay system is serine 519. 3 N-linked (GlcNAc...) asparagine glycosylation sites follow: asparagine 601, asparagine 649, and asparagine 659.

The protein belongs to the peptidase S8 family. In terms of processing, the C-terminal propeptide is autocleaved. As to expression, specifically expressed in root stele of the root hair zone.

It is found in the secreted. The polypeptide is Subtilisin-like protease SBT4.12 (Arabidopsis thaliana (Mouse-ear cress)).